The chain runs to 336 residues: Dihydroorotate dehydrogenase (quinone) (336 aa).

Residues 62 to 66 and T86 each bind FMN; that span reads AGLDK. K66 contacts substrate. A substrate-binding site is contributed by 111 to 115; the sequence is NRMGF. FMN-binding residues include N139 and N172. N172 contributes to the substrate binding site. S175 serves as the catalytic Nucleophile. Position 177 (N177) interacts with substrate. 2 residues coordinate FMN: K217 and T245. 246–247 serves as a coordination point for substrate; the sequence is NT. FMN-binding positions include G268, G297, and 318-319; that span reads YT.

This sequence belongs to the dihydroorotate dehydrogenase family. Type 2 subfamily. Monomer. FMN serves as cofactor.

Its subcellular location is the cell membrane. It catalyses the reaction (S)-dihydroorotate + a quinone = orotate + a quinol. Its pathway is pyrimidine metabolism; UMP biosynthesis via de novo pathway; orotate from (S)-dihydroorotate (quinone route): step 1/1. Its function is as follows. Catalyzes the conversion of dihydroorotate to orotate with quinone as electron acceptor. The polypeptide is Dihydroorotate dehydrogenase (quinone) (Vibrio parahaemolyticus serotype O3:K6 (strain RIMD 2210633)).